Consider the following 473-residue polypeptide: Suppressor of SWI4 1 homolog (473 aa).

The region spanning 29-292 (PHSFVFTRGC…LIKVQEGVGE (264 aa)) is the Brix domain. 2 positions are modified to phosphoserine: S238 and S240. Residues 323–473 (AQRQAQQAQN…GRGRPGKRVA (151 aa)) are disordered. A compositionally biased stretch (low complexity) spans 324 to 334 (QRQAQQAQNVQ). Over residues 335-352 (RKQEQREAHRKKSLEGMK) the composition is skewed to basic and acidic residues. Position 359 is a phosphoserine (S359). Residues 375–388 (LGEDDDEQEDDDIE) show a composition bias toward acidic residues. Over residues 409–421 (KRLAKSPGRKRKR) the composition is skewed to basic residues. The segment covering 422 to 443 (WEMDRGRGRLCDQKFPKTKDKS) has biased composition (basic and acidic residues). N6-acetyllysine is present on K438. The segment covering 462-473 (GRGRGRPGKRVA) has biased composition (basic residues).

As to expression, widely expressed.

It localises to the nucleus. The protein localises to the nucleolus. Functionally, may have a role in cell growth. In Homo sapiens (Human), this protein is Suppressor of SWI4 1 homolog (PPAN).